Consider the following 433-residue polypeptide: Trigger factor (433 aa).

The region spanning 163-248 (GDTVNIDFSG…VNEIKFKEVP (86 aa)) is the PPIase FKBP-type domain.

The protein belongs to the FKBP-type PPIase family. Tig subfamily.

Its subcellular location is the cytoplasm. It carries out the reaction [protein]-peptidylproline (omega=180) = [protein]-peptidylproline (omega=0). Involved in protein export. Acts as a chaperone by maintaining the newly synthesized protein in an open conformation. Functions as a peptidyl-prolyl cis-trans isomerase. This chain is Trigger factor, found in Staphylococcus aureus (strain Newman).